A 1275-amino-acid chain; its full sequence is Inner capsid protein lambda-1 (1275 aa).

Residues 1-12 (MKRIPRKTKGKS) are compositionally biased toward basic residues. A disordered region spans residues 1 to 149 (MKRIPRKTKG…DNEGGSNQKP (149 aa)). Composition is skewed to basic and acidic residues over residues 18 to 35 (DSTE…DKQN) and 75 to 117 (NNDE…DKSK). Positions 118 to 149 (AQVTYSDTGINNANELSRSGNVDNEGGSNQKP) are enriched in polar residues. A C2H2-type zinc finger spans residues 181–203 (YQCHVCSAVLFSPLDLDAHVASH).

The protein belongs to the orthoreovirus lambda-1 protein family. Homodecamer; each decamer is made up of two conformers of VP2, called VP2A and VP2B. 12 homodecamers assemble to form an icosahedral capsid. Interacts with protein mu-NS; in viral inclusions. Requires Mg(2+) as cofactor. Mn(2+) serves as cofactor.

The protein localises to the virion. The catalysed reaction is ATP + H2O = ADP + phosphate + H(+). Its function is as follows. Inner capsid protein that self-assembles to form an icosahedral capsid with a T=2 symmetry, which consists of 120 copies of VP2, with channels at each of its five-fold vertices. This capsid constitutes the innermost concentric layer of the viral mature particle. Displays NTPase, RNA 5'-triphosphatase (RTPase) and RNA helicase activities. Helicase activity might be involved in unwinding or reannealing dsRNA during RNA synthesis. RTPase enzymatic activity represents the first step in RNA capping, which yields a 5'-diphosphorylated plus-strand RNA. The protein is Inner capsid protein lambda-1 (L3) of Reovirus type 3 (strain Dearing) (T3D).